The chain runs to 422 residues: Metallocarboxypeptidase A-like protein TRV_02598 (422 aa).

An N-terminal signal peptide occupies residues Met-1–Gly-16. The propeptide at Gly-17–Asn-119 is activation peptide. In terms of domain architecture, Peptidase M14 spans Ser-125 to Leu-421. 2 residues coordinate Zn(2+): His-185 and Glu-188. Residues His-185–Glu-188, Arg-240, and Asn-256–Arg-257 contribute to the substrate site. A disulfide bridge links Cys-250 with Cys-273. Zn(2+) is bound at residue His-311. Substrate is bound at residue Ser-312 to Tyr-313. The Proton donor/acceptor role is filled by Glu-387.

It belongs to the peptidase M14 family. The cofactor is Zn(2+).

Its subcellular location is the secreted. Extracellular metalloprotease that contributes to pathogenicity. This Trichophyton verrucosum (strain HKI 0517) protein is Metallocarboxypeptidase A-like protein TRV_02598.